The primary structure comprises 559 residues: Hepatocyte nuclear factor 1-beta-A (559 aa).

Residues 1–35 form a dimerization region; sequence MFANMVSKLTSLQQELLSALLDSGVTKDVLLQALE. Residues 5 to 36 form the HNF-p1 domain; that stretch reads MVSKLTSLQQELLSALLDSGVTKDVLLQALED. Positions 53-98 are disordered; that stretch reads MSPSGSKLSDTDSKPVFHTLTNGHSKGKLSGDEGSEDGDDYDTPPI. Acidic residues predominate over residues 85–94; sequence EGSEDGDDYD. The region spanning 100–195 is the POU-specific atypical domain; that stretch reads KELQSQNTEE…ILRQFNQATQ (96 aa). Residues 240–320 constitute a DNA-binding region (homeobox; HNF1-type); sequence LRRNRFKWGP…NRRKEEAFRQ (81 aa). Composition is skewed to low complexity over residues 334-354 and 370-381; these read LNSLLSHSSPHHPQTSSSPPS and TSSTTINHHSSN. The interval 334–384 is disordered; sequence LNSLLSHSSPHHPQTSSSPPSKMQGVRYSQQGPGEVTSSTTINHHSSNAMS.

Belongs to the HNF1 homeobox family. In terms of assembly, binds DNA as a dimer. Can form homodimer or heterodimer with HNF1-alpha. In terms of tissue distribution, during embryonic development, expressed dynamically in the developing hindbrain, kidney (pronephros), gut, liver and pancreas; expressed in both intermediate mesoderm (precursor to the kidney) and the caudal hindbrain (including rhombomeres r5 and r6) at 10 hpf with expression diminishing caudally by 14 hpf. Strongly expressed in adult kidney, gut, liver and swim bladder; weakly expressed in brain, eye, testis, ovary and heart.

The protein localises to the nucleus. Its function is as follows. Transcription factor that binds to the inverted palindrome 5'-GTTAATNATTAAC-3'. Required for induction of rhombomere r5/r6 gene expression in the hindbrain. The polypeptide is Hepatocyte nuclear factor 1-beta-A (hnf1ba) (Danio rerio (Zebrafish)).